We begin with the raw amino-acid sequence, 208 residues long: MFVKICGIKSLEELEIVEKHADATGVVVNSNSKRRIPLEKAREIIENSAIPVFLVSTMVGFSEWAMAIERTGAQYIQVHSNALPQTIDTLKKEFGVFVMKAFRVPTISKNPEEDANRLLSEISRYNADMVLLDTGAGSGKLHDLRVSSLVARKIPVIVAGGLNAENVEEVIKVVKPYGVDVSSGVEKYGIKDPKLVEEFVRRAKNVVW.

The protein belongs to the TrpF family.

It catalyses the reaction N-(5-phospho-beta-D-ribosyl)anthranilate = 1-(2-carboxyphenylamino)-1-deoxy-D-ribulose 5-phosphate. Its pathway is amino-acid biosynthesis; L-tryptophan biosynthesis; L-tryptophan from chorismate: step 3/5. The chain is N-(5'-phosphoribosyl)anthranilate isomerase from Pyrococcus furiosus (strain ATCC 43587 / DSM 3638 / JCM 8422 / Vc1).